The chain runs to 26 residues: AMP deaminase 1 (26 aa).

It belongs to the metallo-dependent hydrolases superfamily. Adenosine and AMP deaminases family. In terms of assembly, homotetramer. Zn(2+) is required as a cofactor.

The enzyme catalyses AMP + H2O + H(+) = IMP + NH4(+). It functions in the pathway purine metabolism; IMP biosynthesis via salvage pathway; IMP from AMP: step 1/1. In terms of biological role, AMP deaminase plays a critical role in energy metabolism. The chain is AMP deaminase 1 (AMPD1) from Oryctolagus cuniculus (Rabbit).